We begin with the raw amino-acid sequence, 600 residues long: Aspartate--tRNA ligase (600 aa).

Glu-175 lines the L-aspartate pocket. Positions 199-202 (QLFK) are aspartate. Arg-221 serves as a coordination point for L-aspartate. Residues 221–223 (RDE) and Gln-230 contribute to the ATP site. His-448 lines the L-aspartate pocket. Glu-484 contacts ATP. Arg-491 lines the L-aspartate pocket. 536–539 (GLDR) is a binding site for ATP.

It belongs to the class-II aminoacyl-tRNA synthetase family. Type 1 subfamily. As to quaternary structure, homodimer.

Its subcellular location is the cytoplasm. The catalysed reaction is tRNA(Asp) + L-aspartate + ATP = L-aspartyl-tRNA(Asp) + AMP + diphosphate. In terms of biological role, catalyzes the attachment of L-aspartate to tRNA(Asp) in a two-step reaction: L-aspartate is first activated by ATP to form Asp-AMP and then transferred to the acceptor end of tRNA(Asp). The protein is Aspartate--tRNA ligase of Limosilactobacillus reuteri (strain DSM 20016) (Lactobacillus reuteri).